Here is a 429-residue protein sequence, read N- to C-terminus: Enolase (429 aa).

Q165 contacts (2R)-2-phosphoglycerate. E207 serves as the catalytic Proton donor. 3 residues coordinate Mg(2+): D244, E287, and D314. The (2R)-2-phosphoglycerate site is built by K339, R368, S369, and K390. The active-site Proton acceptor is the K339.

It belongs to the enolase family. The cofactor is Mg(2+).

It localises to the cytoplasm. It is found in the secreted. The protein localises to the cell surface. It carries out the reaction (2R)-2-phosphoglycerate = phosphoenolpyruvate + H2O. The protein operates within carbohydrate degradation; glycolysis; pyruvate from D-glyceraldehyde 3-phosphate: step 4/5. Catalyzes the reversible conversion of 2-phosphoglycerate (2-PG) into phosphoenolpyruvate (PEP). It is essential for the degradation of carbohydrates via glycolysis. The protein is Enolase of Roseiflexus castenholzii (strain DSM 13941 / HLO8).